The chain runs to 284 residues: Lipase chaperone (284 aa).

The helical transmembrane segment at 4 to 24 threads the bilayer; it reads IAWSLGILVTIGALCAIVWPS.

Belongs to the lipase chaperone family.

The protein localises to the cell inner membrane. May be involved in the folding of the extracellular lipase during its passage through the periplasm. This Vibrio cholerae serotype O1 (strain ATCC 39315 / El Tor Inaba N16961) protein is Lipase chaperone (lifO).